Reading from the N-terminus, the 920-residue chain is Ubiquitin ligase-binding protein BUL2 (920 aa).

Over residues 1 to 10 (MTFTFSTSSR) the composition is skewed to polar residues. The segment at 1-89 (MTFTFSTSSR…EENSLEMDCT (89 aa)) is disordered. T22 is modified (phosphothreonine). Residues 35–57 (QQLSSNSTDNSLHPNSGQTPRAS) show a composition bias toward polar residues. Residues 73–82 (DRLRQEREEN) show a composition bias toward basic and acidic residues. A PY-motif motif is present at residues 129 to 133 (FPPSY). Phosphoserine is present on S557.

Belongs to the BUL1 family. Component of the RSP5-BUL1/2 ubiquitin ligase complex composed of at least RSP5 and BUL1 or BUL2.

Its subcellular location is the cytoplasm. It functions in the pathway protein modification; protein ubiquitination. In terms of biological role, component of a RSP5 ubiquitin ligase complex which specifies polyubiquitination and intracellular trafficking of the general amino acid permease GAP1 as well as other permeases such as PMA1. The RSP5-BUL1/2 complex is also necessary for the heat-shock element (HSE)-mediated gene expression, nitrogen starvation GLN3-dependent transcription and pressure-induced differential regulation of the 2 tryptophan permeases TAT1 and TAT2. The protein is Ubiquitin ligase-binding protein BUL2 (BUL2) of Saccharomyces cerevisiae (strain ATCC 204508 / S288c) (Baker's yeast).